A 381-amino-acid chain; its full sequence is Lipid-A-disaccharide synthase (381 aa).

It belongs to the LpxB family.

It carries out the reaction 2-N,3-O-bis[(3R)-3-hydroxytetradecanoyl]-alpha-D-glucosaminyl 1-phosphate + UDP-2-N,3-O-bis[(3R)-3-hydroxytetradecanoyl]-alpha-D-glucosamine = lipid A disaccharide (E. coli) + UDP + H(+). It catalyses the reaction a lipid X + a UDP-2-N,3-O-bis[(3R)-3-hydroxyacyl]-alpha-D-glucosamine = a lipid A disaccharide + UDP + H(+). It functions in the pathway glycolipid biosynthesis; lipid IV(A) biosynthesis; lipid IV(A) from (3R)-3-hydroxytetradecanoyl-[acyl-carrier-protein] and UDP-N-acetyl-alpha-D-glucosamine: step 5/6. Its function is as follows. Condensation of UDP-2,3-diacylglucosamine and 2,3-diacylglucosamine-1-phosphate to form lipid A disaccharide, a precursor of lipid A, a phosphorylated glycolipid that anchors the lipopolysaccharide to the outer membrane of the cell. This chain is Lipid-A-disaccharide synthase, found in Erwinia tasmaniensis (strain DSM 17950 / CFBP 7177 / CIP 109463 / NCPPB 4357 / Et1/99).